We begin with the raw amino-acid sequence, 282 residues long: Snake venom serine protease NaSP (282 aa).

A signal peptide spans Met1–Ser18. Residues Lys19–Leu56 constitute a propeptide that is removed on maturation. N-linked (GlcNAc...) asparagine glycans are attached at residues Asn41 and Asn45. The Peptidase S1 domain occupies Ile57–Ala280. Intrachain disulfides connect Cys63–Cys195, Cys82–Cys98, Cys174–Cys241, Cys206–Cys220, and Cys231–Cys256. His97 acts as the Charge relay system in catalysis. An N-linked (GlcNAc...) asparagine glycan is attached at Asn135. Asp142 acts as the Charge relay system in catalysis. N-linked (GlcNAc...) asparagine glycosylation is found at Asn149 and Asn153. Ser235 serves as the catalytic Charge relay system.

It belongs to the peptidase S1 family. Snake venom subfamily. In terms of assembly, monomer. Expressed by the venom gland.

It is found in the secreted. In terms of biological role, snake venom serine protease that may act in the hemostasis system of the prey. The sequence is that of Snake venom serine protease NaSP from Naja atra (Chinese cobra).